We begin with the raw amino-acid sequence, 362 residues long: G-protein coupled receptor 4 (362 aa).

Topologically, residues 1–8 (MGNRTLEG) are extracellular. A glycan (N-linked (GlcNAc...) asparagine) is linked at Asn-3. Residues 9–45 (CHVDSRMDHLFPPSLYIFVIGVGLPTNCLALWAAYRQ) form a helical membrane-spanning segment. Disulfide bonds link Cys-9-Cys-258 and Cys-90-Cys-168. Over 46 to 49 (VRQR) the chain is Cytoplasmic. A helical membrane pass occupies residues 50-80 (NELGVYLMNLSIADLLYICTLPLWVDYFLHH). At 81-85 (DNWIH) the chain is on the extracellular side. The helical transmembrane segment at 86 to 121 (GPGSCKLFGFIFYTNIYISIAFLCCISVDRYLAVAH) threads the bilayer. Over 122–129 (PLRFARLR) the chain is Cytoplasmic. A helical membrane pass occupies residues 130 to 156 (RVKTAVAVSSVVWATELGANSAPLFHD). Residues 157-172 (ELFRDRYNHTFCFEKF) are Extracellular-facing. The tract at residues 157 to 172 (ELFRDRYNHTFCFEKF) is extracellular loop 2 (ECL2). Residue Asn-164 is glycosylated (N-linked (GlcNAc...) asparagine). The chain crosses the membrane as a helical span at residues 173–210 (PMEGWVAWMNLYRVFVGFLFPWALMLLSYRGILRAVRG). Residues 211–214 (SVST) lie on the Cytoplasmic side of the membrane. The helical transmembrane segment at 215-250 (ERQEKVKIKRLALSLIAIVLVCFAPYHVLLLSRSAV) threads the bilayer. At 251 to 260 (YLRRPRDCGF) the chain is on the extracellular side. Residues 261-289 (EERVFSAYHSSLAFTSLNCVADPILYCLV) traverse the membrane as a helical segment. Topologically, residues 290–362 (NEGARSDVAK…VQLKMLPPAQ (73 aa)) are cytoplasmic.

Belongs to the G-protein coupled receptor 1 family.

It localises to the cell membrane. Its activity is regulated as follows. Activated by a network of residues that connects an extracellular-facing cavity to Glu-145, a conserved charged residue buried in the transmembrane core of the receptor. Protonation likely drives conformational changes in extracellular loop 2 (ECL2), which stabilizes movement of transmembrane 3 (TM3) and a series of rearrangements that connect the extracellular-facing cavity to Glu-145, a residue only conserved in proton-sensing G-protein coupled receptors. Its function is as follows. Proton-sensing G-protein coupled receptor activated by extracellular pH, which is required to monitor pH changes and generate adaptive reactions. Activated by an optimal pH of 6.8-7.2. Ligand binding causes a conformation change that triggers signaling via guanine nucleotide-binding proteins (G proteins) and modulates the activity of downstream effectors, such as adenylate cyclase. GPR4 is mainly coupled to G(s) G proteins and mediates activation of adenylate cyclase activity. May also couple with G(q) and G(12)/G(13) G proteins. Acts as a key regulator of respiratory sensitivity to CO2/H(+) in brain retrotrapezoid nucleus neurons: acts by mediating detection of protons generated by the formation of carbonic acid in the blood, an important mechanism to impulse to breathe. Also acts as a regulator of acid secretion in the kidney collecting duct by maintaining acid-base homeostasis in the kidney. Acidosis-induced GPR4 activation increases paracellular gap formation and permeability of vascular endothelial cells, possibly through the G(12)/G(13)/Rho GTPase signaling pathway. This chain is G-protein coupled receptor 4 (GPR4), found in Bos taurus (Bovine).